The following is a 621-amino-acid chain: NADPH-dependent diflavin oxidoreductase 1 (621 aa).

Residues 6 to 168 (IAVLYGSETG…VYFEFEKRII (163 aa)) form the Flavodoxin-like domain. FMN contacts are provided by residues 12–17 (SETGNA), 59–62 (STTG), 106–115 (LGDSSYPKFN), and Glu142. Positions 224–489 (KLIKTGTITL…VGPGVGLAPL (266 aa)) constitute an FAD-binding FR-type domain. FAD-binding positions include Arg381, 411 to 414 (RLYS), and 443 to 446 (GVCT). NADP(+)-binding positions include 536 to 537 (SR) and 545 to 549 (TKYVQ). Residue Trp621 coordinates FAD.

It belongs to the NADPH-dependent diflavin oxidoreductase NDOR1 family. In the N-terminal section; belongs to the flavodoxin family. This sequence in the C-terminal section; belongs to the flavoprotein pyridine nucleotide cytochrome reductase family. As to quaternary structure, interacts with DRE2; as part of the cytosolic iron-sulfur (Fe-S) protein assembly (CIA) machinery. FAD is required as a cofactor. The cofactor is FMN.

The protein localises to the cytoplasm. The protein resides in the mitochondrion. It carries out the reaction 2 oxidized [2Fe-2S]-[protein] + NADPH = 2 reduced [2Fe-2S]-[protein] + NADP(+) + H(+). Functionally, NADPH-dependent reductase which is a central component of the cytosolic iron-sulfur (Fe-S) protein assembly (CIA) machinery. Transfers electrons from NADPH via its FAD and FMN prosthetic groups to the [2Fe-2S] cluster of DRE2, another key component of the CIA machinery. In turn, this reduced cluster provides electrons for assembly of cytosolic iron-sulfur cluster proteins. Positively controls H(2)O(2)-induced cell death. In Candida glabrata (strain ATCC 2001 / BCRC 20586 / JCM 3761 / NBRC 0622 / NRRL Y-65 / CBS 138) (Yeast), this protein is NADPH-dependent diflavin oxidoreductase 1.